We begin with the raw amino-acid sequence, 1404 residues long: MKDLLKFLKQQSKTEEFEGIKIGLASPDLIRSWSFGEVKKPETINYRTFKPEREGLFCARIFGPVKDYECLCGKYKRLKHRGVICEKCGVEVTQTKVRRERMGHIDLASPVAHIWFLKSLPSRIGLMLDMTLRDIERVLYFESFVVIEPGMTSLERGQMLTEENYLDALEEYGDEFEAKMGAEAVLELLRAIDLEKEIEEMREELPSINSETRRKKITKRLKLIEAFYQSGNKPEWMILKVLPVLPPDLRPLVPLDGGRFATSDLNDLYRRVINRNNRLKRLLDLAAPDIIVRNEKRMLQESVDALLDNGRRGRAITGSNKRPLKSLADMIKGKQGRFRQNLLGKRVDYSGRSVITVGPTLRLHQCGLPKKMALELFKPFIYGKLEGRGLATTIKAAKKMVEREVPEVWDVLDDVIREHPVMLNRAPTLHRLGIQAFEPVLIEGKAIQLHPLVCAAYNADFDGDQMAVHVPLTLEAQLEARSLMMSTNNILSPANGEPVITPSQDVVLGLYYTSRERINGRGEGMAFESVAEVEKAYRTGVAELHARVKVRITETTIAEDGERTESRRIVDTTVGRALLSQVLPKGLSYDLVNQNMGKKQISKLLNTCYRQLGLKDTVIFADQLMYTGFHFATVSGASVGINDMVIPDEKYSLVADAEAEVLEIQEQFQSGLVTAGERYNKVIDIWASANEKVSKAMMDNLSTETVINRDGEEETQASFNSIYMMADSGARGSAAQIRQLAGMRGLMAKPDGSIIETPITANFREGLNVLQYFISTHGARKGLADTALKTANSGYLTRRLVDVAQDLVVIEDDCGTHEGLTMKPLIEGGDVVEPLRERVLGRVVAEDVYYPGTEDVLAPRNTLLDEAWCDKLEEHSIDEVKVRSVISCDTDFGVCAACYGRDLARGHLINQGEAIGVVAAQSIGEPGTQLTMRTFHIGGAASRASAENNVQVKNAGTVKLHNAKHVTNSDGKLVIVSRSSEIAIIDELGREKERYKVPYGTVLEKLEDATVNAGEVIANRDPHTHPIVSEVAGSIKFVDMIEGVTMTRQTDELTGLSSIVVMDVGQRPTAGKEMRPAIRLVGADGNDLMIPGTEVPAQYFLPGKAIVNQDDNAQIAVGDALARIPQESSKTRDITGGLPRVADLFEARKPKEPAILAEYSGTISFGKETKGKRRLVITPADGGKPYEEMIPKWRNLNVFEGEKVERGEVIADGPEAAHDILRLRGIHKVANYIVNEVQDVYRLQGVKINDKHIEVIIRQMLRKCEITEAGDSEFLPGEQVEVSRVKIANRELEAQGKEPAKFERELLGITKASLATESFISAASFQETTRVLTEAAVGGKSDKLRGLKENVIVGRLIPAGTGYAYHTSRNQAAQNGPAEEVPAISASEAEQNLADLLNLAGSPE.

Zn(2+) contacts are provided by C70, C72, C85, and C88. Mg(2+) contacts are provided by D460, D462, and D464. 4 residues coordinate Zn(2+): C814, C888, C895, and C898.

It belongs to the RNA polymerase beta' chain family. The RNAP catalytic core consists of 2 alpha, 1 beta, 1 beta' and 1 omega subunit. When a sigma factor is associated with the core the holoenzyme is formed, which can initiate transcription. Requires Mg(2+) as cofactor. Zn(2+) serves as cofactor.

The enzyme catalyses RNA(n) + a ribonucleoside 5'-triphosphate = RNA(n+1) + diphosphate. In terms of biological role, DNA-dependent RNA polymerase catalyzes the transcription of DNA into RNA using the four ribonucleoside triphosphates as substrates. The chain is DNA-directed RNA polymerase subunit beta' from Shewanella loihica (strain ATCC BAA-1088 / PV-4).